The following is a 373-amino-acid chain: Glutamate 5-kinase (373 aa).

Residue Lys-15 coordinates ATP. Positions 54, 141, and 153 each coordinate substrate. ATP contacts are provided by residues 173–174 and 215–221; these read SD and TGGMATK. The PUA domain occupies 280-358; that stretch reads RGKLLVDEGA…SEIEVVLGYK (79 aa).

Belongs to the glutamate 5-kinase family.

The protein resides in the cytoplasm. It catalyses the reaction L-glutamate + ATP = L-glutamyl 5-phosphate + ADP. The protein operates within amino-acid biosynthesis; L-proline biosynthesis; L-glutamate 5-semialdehyde from L-glutamate: step 1/2. Catalyzes the transfer of a phosphate group to glutamate to form L-glutamate 5-phosphate. The chain is Glutamate 5-kinase from Syntrophotalea carbinolica (strain DSM 2380 / NBRC 103641 / GraBd1) (Pelobacter carbinolicus).